The following is a 590-amino-acid chain: Nuclear receptor subfamily 2 group C member 1 (590 aa).

Positions 1 to 166 (MATIEEIAHQ…RLQRCIAFGM (166 aa)) are required for interaction with KAT2B. The segment at residues 98–173 (FDLCVVCGDK…FGMKQDSVQC (76 aa)) is a DNA-binding region (nuclear receptor). NR C4-type zinc fingers lie at residues 101–121 (CVVCGDKASGRHYGAITCEGC) and 137–156 (CRGSKDCVINKHHRNRCQYC). A phosphoserine mark is found at serine 185 and serine 203. Position 208 is a phosphothreonine (threonine 208). Threonine 210 carries the phosphothreonine; by MAPK1 modification. Lysine 238 participates in a covalent cross-link: Glycyl lysine isopeptide (Lys-Gly) (interchain with G-Cter in SUMO); alternate. Residue lysine 238 forms a Glycyl lysine isopeptide (Lys-Gly) (interchain with G-Cter in SUMO2); alternate linkage. Positions 333–577 (EGMEGSPHLI…SVIPHILKME (245 aa)) constitute an NR LBD domain. Residues serine 461 and serine 568 each carry the phosphoserine; by PKC modification. The tract at residues 571–590 (PHILKMEPADYNSQIIGHSL) is required for interaction with NRIP1. Residue lysine 575 forms a Glycyl lysine isopeptide (Lys-Gly) (interchain with G-Cter in SUMO2) linkage.

This sequence belongs to the nuclear hormone receptor family. NR2 subfamily. As to quaternary structure, homodimer. Heterodimer; with NR2C2 which is required for chromatin remodeling and for binding to promoter regions such as globin DR1 repeats. Interacts with ESR1; the interaction prevents homodimerization of ESR1 and suppresses its transcriptional activity and cell growth. Interacts with NRIP1 (via its LXXLL motifs); the interaction provides corepressor activity. Interacts with HDAC3 (via the DNA-binding domain); the interaction recruits phosphorylated NR2C1 to PML bodies for sumoylation. Interacts with HDAC4 (via the DNA-binding domain). Interacts with PIAS1; the interaction is required for sumoylation of NR2C1. Interacts with UBE2I; the interaction is required for sumoylation of NR2C1. Interacts with KAT2B; the interaction acts as a corepressor of gene expression. In terms of processing, sumoylation requires both PIAS1 and UBE2I. Sumoylation appears to dissociate NR2C1 from the PML nuclear bodies. Enhances the interaction with NRIP1 but inhibits interaction with KAT2B. In proliferating cells, stimulation by all-trans retinoic acid, activation of MAPK1-mediated phosphorylation and recruitment to PML bodies with subsequent sumoylation, suppresses OCT4 expression. Phosphorylated on several serine and threonine residues. Phosphorylation on Thr-210, stimulated by all-trans retinoic acid (atRA) mediates PML location and sumoylation in proliferating cells which then modulates its association with effector molecules, KAT2B and NRIP1. Phosphorylation on Ser-568 by PKC is important for protein stability and function as activator of RARB. Isoform 1 is highly expressed in the adlumenal compartment of the seminiferous tubule of adult testes (at protein level) and in the eyes of newborn animals. Weakly expressed in other adult organs including the seminal vesicle, prostate, ovary, adrenal gland, heart, thymus, placenta and brain. Expressed during embryonic stages in developing eyes, brain and cartilage primordia (at protein level). Also expressed in the developing spinal motor neurons and in the sympathetic-, parasympathetic- and sensory ganglia of the embryonic PNS. Expressed in the developing neural epithelia of the inner ear, nasal cavity, tongue and retina. At day 16.5, expressed in various tissues including kidney and intestine. In contrast, isoform 2 is widely expressed at a low level throughout the adult testis.

It is found in the nucleus. The protein resides in the PML body. Orphan nuclear receptor. Binds the IR7 element in the promoter of its own gene in an autoregulatory negative feedback mechanism. Primarily repressor of a broad range of genes including ESR1 and RARB. Together with NR2C2, forms the core of the DRED (direct repeat erythroid-definitive) complex that represses embryonic and fetal globin transcription. Binds to hormone response elements (HREs) consisting of two 5'-AGGTCA-3' half site direct repeat consensus sequences. Also activator of OCT4 gene expression. Plays a fundamental role in early embryogenesis and regulates embryonic stem cell proliferation and differentiation. Mediator of retinoic acid-regulated preadipocyte proliferation. The sequence is that of Nuclear receptor subfamily 2 group C member 1 from Mus musculus (Mouse).